A 648-amino-acid polypeptide reads, in one-letter code: MAGKRVLVIDNGSYECRVGWSDSKEPDLRFRNVLTKPRKDRKKEAAASEGSASQTTVEQSAEIQVGNDITNIEAVRAHLKSPFERNVITNWNHQEQIFDYIFTKMGFDGQDKIDHPIILTEALANPNFCRQQMNELLFECYGIPSVSYGIDALYSWKHHQQKQKNISDALIISFGYSTTHVIPVLDGKLQLEHVRRLNVGGYHIITYLFRLMQMKYPVHLNAITISRMEKLVHEHCHIAVDYKEELVQWAQMDYYDEHIMKIQLPYNAVTATNAMLTAEQKQEKRRELAHRLLDIKKNREQEKLREDEQQLFVYNKLRQLYEQKKLDKFERALQQQQIGTLEDLDSLIATINSRIKRAQERAQSGPRPSKQQERLNKMPKPPEGMSQADWLAELQGKREKILGRKQARQQQRSEQAKRHTHAAQERMRIISSLAKNEKRRKANGEEEDDGFGMNDNDWDVYKRINRYNDDSDSDADNEKLMQFDKILNHYDANTDGNSNVPPQSAAENYQLHFGVENIRVPEVLFQPSMIGCSEAGLAELIAFVLKLFPAAEQQRLVEHVYLTGGCAQFKGLKERLIKELMEMRPFQSKFAIYESDEPTLSAWLGACVHAGEPTFGQTLTTRQDHQEHGREFFREHTASNIFYPTPKD.

The interval 34–59 (LTKPRKDRKKEAAASEGSASQTTVEQ) is disordered. Coiled coils occupy residues 277–311 (TAEQKQEKRRELAHRLLDIKKNREQEKLREDEQQL) and 340–364 (TLEDLDSLIATINSRIKRAQERAQS). 2 disordered regions span residues 357–385 (RAQERAQSGPRPSKQQERLNKMPKPPEGM) and 403–455 (GRKQ…GMND). Residues 414-428 (EQAKRHTHAAQERMR) are compositionally biased toward basic and acidic residues. Phosphoserine is present on residues Ser471 and Ser473.

Belongs to the actin family. ARP5 subfamily. In terms of assembly, component of the chromatin remodeling Ino80 complex.

The protein resides in the nucleus. Its function is as follows. Proposed core component of the chromatin remodeling Ino80 complex which is involved in transcriptional regulation, DNA replication and probably DNA repair. The polypeptide is Actin-related protein 5 (Drosophila melanogaster (Fruit fly)).